Reading from the N-terminus, the 299-residue chain is Oxygen-dependent coproporphyrinogen-III oxidase (299 aa).

A substrate-binding site is contributed by Ser-92. 2 residues coordinate Mn(2+): His-96 and His-106. His-106 acts as the Proton donor in catalysis. 108–110 (NVR) is a substrate binding site. Residues His-145 and His-175 each contribute to the Mn(2+) site. Residues 240–275 (YVEFNLVWDRGTLFGLQTGGRTESILMSMPPLVRWE) are important for dimerization. 258–260 (GGR) contacts substrate.

It belongs to the aerobic coproporphyrinogen-III oxidase family. In terms of assembly, homodimer. It depends on Mn(2+) as a cofactor.

It localises to the cytoplasm. It carries out the reaction coproporphyrinogen III + O2 + 2 H(+) = protoporphyrinogen IX + 2 CO2 + 2 H2O. It functions in the pathway porphyrin-containing compound metabolism; protoporphyrin-IX biosynthesis; protoporphyrinogen-IX from coproporphyrinogen-III (O2 route): step 1/1. Involved in the heme biosynthesis. Catalyzes the aerobic oxidative decarboxylation of propionate groups of rings A and B of coproporphyrinogen-III to yield the vinyl groups in protoporphyrinogen-IX. The sequence is that of Oxygen-dependent coproporphyrinogen-III oxidase from Escherichia coli O8 (strain IAI1).